The primary structure comprises 242 residues: Lactate utilization protein A 2 (242 aa).

It belongs to the LutA/YkgE family.

In terms of biological role, is involved in L-lactate degradation and allows cells to grow with lactate as the sole carbon source. The sequence is that of Lactate utilization protein A 2 from Bacillus cereus (strain Q1).